Reading from the N-terminus, the 305-residue chain is Glycine--tRNA ligase alpha subunit (305 aa).

It belongs to the class-II aminoacyl-tRNA synthetase family. Tetramer of two alpha and two beta subunits.

It localises to the cytoplasm. The enzyme catalyses tRNA(Gly) + glycine + ATP = glycyl-tRNA(Gly) + AMP + diphosphate. In Streptococcus uberis (strain ATCC BAA-854 / 0140J), this protein is Glycine--tRNA ligase alpha subunit.